A 499-amino-acid chain; its full sequence is Diacylglycerol kinase 1 (499 aa).

The 154-residue stretch at 41 to 194 (APCCPVVVFI…IDSWHIIMRM (154 aa)) folds into the DAGKc domain. A disordered region spans residues 442–479 (PCKSKSVNDPSSPMCCSNHDDDERNSLEDEDEWEEGRK). Residues 446 to 456 (KSVNDPSSPMC) show a composition bias toward polar residues. A compositionally biased stretch (basic and acidic residues) spans 459–468 (NHDDDERNSL).

The protein belongs to the eukaryotic diacylglycerol kinase family. As to quaternary structure, monomer. Highly expressed in roots.

The catalysed reaction is a 1,2-diacyl-sn-glycerol + ATP = a 1,2-diacyl-sn-glycero-3-phosphate + ADP + H(+). Phosphorylates the second messenger diacylglycerol (DAG) to generate phosphatidic acid (PA), another important signaling molecule. PA is required for plant development and responses to abiotic stress. May play a role in disease resistance responses to pathogen attack. Modulates root architecture by regulating the ratio of DAG and PA, which have opposite effect on the promotion or suppression of lateral roots vs seminal roots. Suppresses lateral root number, but promotes seminal root and crown root thickness. This is Diacylglycerol kinase 1 from Oryza sativa subsp. japonica (Rice).